Consider the following 712-residue polypeptide: Probable metal-nicotianamine transporter YSL11 (712 aa).

The tract at residues 25–48 (RRNTTAAARGNAGEEEEEAEAVAP) is disordered. A run of 14 helical transmembrane segments spans residues 70–90 (AFVV…KLSL), 93–113 (GVIP…VRLW), 138–158 (CVVS…LFGM), 180–200 (LGWI…ALVP), 242–262 (LGKY…YTAG), 300–320 (IVNV…WPLI), 345–365 (VFIT…KVFG), 418–438 (VAIG…PLII), 446–466 (ILIA…GSGL), 478–498 (LAIF…LVGL), 532–552 (FVSQ…VFWL), 593–613 (LTLC…KDLV), 631–651 (FYLG…LYFW), and 666–686 (VASG…VLSL).

The protein belongs to the YSL (TC 2.A.67.2) family.

It localises to the membrane. In terms of biological role, may be involved in the transport of nicotianamine-chelated metals. In Oryza sativa subsp. japonica (Rice), this protein is Probable metal-nicotianamine transporter YSL11 (YSL11).